Reading from the N-terminus, the 155-residue chain is FUN14 domain-containing protein 1 (155 aa).

Residues 1–47 (MATRNPPPQDYESDDDSYEVLDLTEYARRHQWWNRVFGHSSGPMVEK) are Cytoplasmic-facing. Residue S13 is modified to Phosphoserine; by CK2. Residue S17 is modified to Phosphoserine; by ULK1. At Y18 the chain carries Phosphotyrosine; by SRC. The short motif at 18–21 (YEVL) is the YXXL element. Residues 48–68 (YSVATQIVMGGVTGWCAGFLF) form a helical membrane-spanning segment. Topologically, residues 69–74 (QKVGKL) are mitochondrial intermembrane. A helical transmembrane segment spans residues 75 to 95 (AATAVGGGFLLLQIASHSGYV). Topologically, residues 96–133 (QIDWKRVEKDVNKAKRQIKKRANKAAPEINNLIEEATE) are cytoplasmic. K119 is covalently cross-linked (Glycyl lysine isopeptide (Lys-Gly) (interchain with G-Cter in ubiquitin)). The chain crosses the membrane as a helical span at residues 134–154 (FIKQNIVISSGFVGGFLLGLA). Position 155 (S155) is a topological domain, mitochondrial intermembrane.

This sequence belongs to the FUN14 family. Interacts (via YXXL motif) with MAP1 LC3 family proteins MAP1LC3A, MAP1LC3B and GABARAP. Interacts with DNM1L/DPR1. Interacts with GPX4. Post-translationally, phosphorylation at Ser-13 by CK2 and at Tyr-18 by SRC inhibits activation of mitophagy. Following hypoxia, dephosphorylated at Tyr-18, leading to interaction with MAP1 LC3 family proteins and triggering mitophagy. Dephosphorylation is mediated by PGAM5. Phosphorylated by ULK1 at Ser-17 which enhances FUNDC1 binding to LC3. In terms of processing, ubiquitinated on Lys-119. Deubiquitinated by USP19; leading to hypoxia-induced DRP1 oligomerization and GTPase activity. Widely expressed.

It localises to the mitochondrion outer membrane. Functionally, integral mitochondrial outer-membrane protein that mediates the formation of mitochondria-associated endoplasmic reticulum membranes (MAMs). In turn, mediates angiogenesis and neoangiogenesis through interference with intracellular Ca(2+) communication and regulation of the vascular endothelial growth factor receptor KDR/VEGFR2 expression at both mRNA and protein levels. Also acts as an activator of hypoxia-induced mitophagy, an important mechanism for mitochondrial quality and homeostasis, by interacting with and recruiting LC3 protein family to mitochondria. Mechanistically, recruits DRP1 at ER-mitochondria contact sites leading to DRP1 oligomerization and GTPase activity to facilitate mitochondrial fission during hypoxia. Additionally, plays a role in hepatic ferroptosis by interacting directly with glutathione peroxidase/GPX4 to facilitate its recruitment into mitochondria through TOM/TIM complex where it is degraded by mitophagy. In Homo sapiens (Human), this protein is FUN14 domain-containing protein 1 (FUNDC1).